Reading from the N-terminus, the 77-residue chain is DNA-directed RNA polymerase subunit Rpo5 (77 aa).

This sequence belongs to the archaeal Rpo5/eukaryotic RPB5 RNA polymerase subunit family. In terms of assembly, part of the RNA polymerase complex.

The protein localises to the cytoplasm. The enzyme catalyses RNA(n) + a ribonucleoside 5'-triphosphate = RNA(n+1) + diphosphate. Its function is as follows. DNA-dependent RNA polymerase (RNAP) catalyzes the transcription of DNA into RNA using the four ribonucleoside triphosphates as substrates. The chain is DNA-directed RNA polymerase subunit Rpo5 from Methanothermobacter thermautotrophicus (strain ATCC 29096 / DSM 1053 / JCM 10044 / NBRC 100330 / Delta H) (Methanobacterium thermoautotrophicum).